The following is a 279-amino-acid chain: Fatty acid metabolism regulator protein (279 aa).

The HTH gntR-type domain occupies 6–74; sequence KSPAGFAEKY…HGKPTKVNQF (69 aa). Positions 34 to 53 form a DNA-binding region, H-T-H motif; that stretch reads ERELSELIGVTRTTLREVLQ.

As to quaternary structure, homodimer.

The protein localises to the cytoplasm. Multifunctional regulator of fatty acid metabolism. The protein is Fatty acid metabolism regulator protein of Vibrio vulnificus (strain CMCP6).